The primary structure comprises 104 residues: Integration host factor subunit alpha (104 aa).

A disordered region spans residues 51–70 (GNFQLRDKPQRPGRNPKTGE).

The protein belongs to the bacterial histone-like protein family. Heterodimer of an alpha and a beta chain.

Functionally, this protein is one of the two subunits of integration host factor, a specific DNA-binding protein that functions in genetic recombination as well as in transcriptional and translational control. The sequence is that of Integration host factor subunit alpha from Ralstonia nicotianae (strain ATCC BAA-1114 / GMI1000) (Ralstonia solanacearum).